Consider the following 209-residue polypeptide: Uracil phosphoribosyltransferase (209 aa).

Residues Arg-79, Arg-104, and 131 to 139 (DPMLATGGS) contribute to the 5-phospho-alpha-D-ribose 1-diphosphate site. Residues Ile-194 and 199 to 201 (GDA) each bind uracil. Residue Asp-200 coordinates 5-phospho-alpha-D-ribose 1-diphosphate.

This sequence belongs to the UPRTase family. Mg(2+) serves as cofactor.

It catalyses the reaction UMP + diphosphate = 5-phospho-alpha-D-ribose 1-diphosphate + uracil. Its pathway is pyrimidine metabolism; UMP biosynthesis via salvage pathway; UMP from uracil: step 1/1. Its activity is regulated as follows. Allosterically activated by GTP. Functionally, catalyzes the conversion of uracil and 5-phospho-alpha-D-ribose 1-diphosphate (PRPP) to UMP and diphosphate. The protein is Uracil phosphoribosyltransferase of Geobacter sp. (strain M21).